The chain runs to 192 residues: Thymidylate kinase (192 aa).

Residue 7-14 coordinates ATP; the sequence is GIDCVGKS.

The protein belongs to the thymidylate kinase family.

The catalysed reaction is dTMP + ATP = dTDP + ADP. In terms of biological role, phosphorylation of dTMP to form dTDP in both de novo and salvage pathways of dTTP synthesis. In Campylobacter jejuni subsp. jejuni serotype O:6 (strain 81116 / NCTC 11828), this protein is Thymidylate kinase.